Reading from the N-terminus, the 360-residue chain is Biotin synthase (360 aa).

In terms of domain architecture, Radical SAM core spans 83-315 (FCGKYFDLCT…KSFLRYCGGR (233 aa)). [4Fe-4S] cluster-binding residues include C101, C105, and C108. Residues S145, C180, C240, and R310 each contribute to the [2Fe-2S] cluster site.

This sequence belongs to the radical SAM superfamily. Biotin synthase family. In terms of assembly, homodimer. Requires [4Fe-4S] cluster as cofactor. [2Fe-2S] cluster is required as a cofactor.

It carries out the reaction (4R,5S)-dethiobiotin + (sulfur carrier)-SH + 2 reduced [2Fe-2S]-[ferredoxin] + 2 S-adenosyl-L-methionine = (sulfur carrier)-H + biotin + 2 5'-deoxyadenosine + 2 L-methionine + 2 oxidized [2Fe-2S]-[ferredoxin]. The protein operates within cofactor biosynthesis; biotin biosynthesis; biotin from 7,8-diaminononanoate: step 2/2. Catalyzes the conversion of dethiobiotin (DTB) to biotin by the insertion of a sulfur atom into dethiobiotin via a radical-based mechanism. The polypeptide is Biotin synthase (Fusobacterium nucleatum subsp. nucleatum (strain ATCC 25586 / DSM 15643 / BCRC 10681 / CIP 101130 / JCM 8532 / KCTC 2640 / LMG 13131 / VPI 4355)).